We begin with the raw amino-acid sequence, 65 residues long: Muscarinic m1-toxin2 (65 aa).

4 disulfides stabilise this stretch: C3/C24, C17/C42, C46/C57, and C58/C63.

It belongs to the three-finger toxin family. Short-chain subfamily. Aminergic toxin sub-subfamily. In terms of assembly, monomer. As to expression, expressed by the venom gland.

It is found in the secreted. Its function is as follows. Binds irreversibly and specifically to M1 (CHRM1) muscarinic acetylcholine receptors, blocking further binding of antagonists and preventing the action of agonists. This is Muscarinic m1-toxin2 from Dendroaspis angusticeps (Eastern green mamba).